We begin with the raw amino-acid sequence, 494 residues long: MAARYTEAVLAALGVLSVCSASSSSGSGASGKAGGEAEWAEPWDGAVFRPPAALGAVGMTRGLGSPPPGNAETVDLPVLLWWSPGLFPHFPGDSERIECALGACVASRDRRARADPRTRALLFYGTDFRAADAPLPRLAHQSWALLHEESPLNNFLLSHGPGIRLFNLTATFSRHSDYPLPLQWLPGAAYLRRPAPPLRERAEWRRRGYAPLLYLQSHCDVPSDRDRYVRELMRYIPVDSYGKCLQNREPPTVRLQDTATATTEDPELMAFLSRYKFHLAMENAICNDYMTEKLWRPMHLGAVPVYRGSPSVRDWMPNNHSVILIDDFESPQKLAEFIDFLDKNDEEYMKYLAYKQPGGITNQFLLDNLEHREWGVNDPMLPNYLNGFECFVCDHELARLDAEKAHESSPRDIPVLEPHIAQLSHMDCPVPTPGFGKVEEIPENDSWKEMWLQDYWQGLYQGEALTAMIHNNETQQSKFWDYVHEIFMKRNKNL.

Residues 1–7 are Cytoplasmic-facing; sequence MAARYTE. A helical; Signal-anchor for type II membrane protein transmembrane segment spans residues 8–24; the sequence is AVLAALGVLSVCSASSS. Residues 25–494 lie on the Lumenal side of the membrane; it reads SGSGASGKAG…EIFMKRNKNL (470 aa). The N-linked (GlcNAc...) asparagine glycan is linked to Asn-167. Residues Cys-390 and Cys-393 are joined by a disulfide bond.

The protein belongs to the glycosyltransferase 10 family.

The protein localises to the endoplasmic reticulum membrane. The enzyme catalyses L-threonyl-[protein] + GDP-beta-L-fucose = 3-O-(alpha-L-fucosyl)-L-threonyl-[protein] + GDP + H(+). It carries out the reaction L-seryl-[protein] + GDP-beta-L-fucose = 3-O-(alpha-L-fucosyl)-L-seryl-[protein] + GDP + H(+). It participates in protein modification; protein glycosylation. Functionally, protein O-fucosyltransferase that specifically catalyzes O-fucosylation of serine or threonine residues in EMI domains of target proteins, such as MMRN1, MMRN2 and EMID1. Attaches fucose through an O-glycosidic linkage. O-fucosylation of EMI domain-containing proteins may be required for facilitating protein folding and secretion. Also shows minor alpha-(1,3)-fucosyltransferase activity toward activity toward biantennary N-glycan acceptors. However, this was tested with a library of synthetic substrates and this activity is unsure in vivo. In Rattus norvegicus (Rat), this protein is GDP-fucose protein O-fucosyltransferase 4 (Fut11).